The primary structure comprises 229 residues: Uracil-DNA glycosylase (229 aa).

Aspartate 70 (proton acceptor) is an active-site residue.

The protein belongs to the uracil-DNA glycosylase (UDG) superfamily. UNG family.

The protein localises to the cytoplasm. It catalyses the reaction Hydrolyzes single-stranded DNA or mismatched double-stranded DNA and polynucleotides, releasing free uracil.. In terms of biological role, excises uracil residues from the DNA which can arise as a result of misincorporation of dUMP residues by DNA polymerase or due to deamination of cytosine. The protein is Uracil-DNA glycosylase of Chlamydia trachomatis serovar A (strain ATCC VR-571B / DSM 19440 / HAR-13).